The chain runs to 126 residues: Glycine cleavage system H protein (126 aa).

The Lipoyl-binding domain occupies 22-104 (VVFIGITDYA…YGAGWIIKVK (83 aa)). N6-lipoyllysine is present on K63.

The protein belongs to the GcvH family. In terms of assembly, the glycine cleavage system is composed of four proteins: P, T, L and H. Requires (R)-lipoate as cofactor.

Functionally, the glycine cleavage system catalyzes the degradation of glycine. The H protein shuttles the methylamine group of glycine from the P protein to the T protein. The protein is Glycine cleavage system H protein of Porphyromonas gingivalis (strain ATCC 33277 / DSM 20709 / CIP 103683 / JCM 12257 / NCTC 11834 / 2561).